The following is a 384-amino-acid chain: PqqA peptide cyclase (384 aa).

The Radical SAM core domain occupies 14 to 226 (IPAPVGLLAE…IRIVEAARER (213 aa)). The [4Fe-4S] cluster site is built by Cys28, Cys32, and Cys35.

This sequence belongs to the radical SAM superfamily. PqqE family. In terms of assembly, interacts with PqqD. The interaction is necessary for activity of PqqE. The cofactor is [4Fe-4S] cluster.

It catalyses the reaction [PQQ precursor protein] + S-adenosyl-L-methionine = E-Y cross-linked-[PQQ precursor protein] + 5'-deoxyadenosine + L-methionine + H(+). It functions in the pathway cofactor biosynthesis; pyrroloquinoline quinone biosynthesis. Functionally, catalyzes the cross-linking of a glutamate residue and a tyrosine residue in the PqqA protein as part of the biosynthesis of pyrroloquinoline quinone (PQQ). The sequence is that of PqqA peptide cyclase from Methylorubrum populi (strain ATCC BAA-705 / NCIMB 13946 / BJ001) (Methylobacterium populi).